Consider the following 446-residue polypeptide: N-succinylarginine dihydrolase (446 aa).

Substrate contacts are provided by residues 19–28 (AGLSFGNVAS), Asn110, and 137–138 (HR). The active site involves Glu174. Substrate is bound at residue Arg213. His249 is a catalytic residue. Residues Asp251 and Asn364 each contribute to the substrate site. Cys370 serves as the catalytic Nucleophile.

The protein belongs to the succinylarginine dihydrolase family. As to quaternary structure, homodimer.

The catalysed reaction is N(2)-succinyl-L-arginine + 2 H2O + 2 H(+) = N(2)-succinyl-L-ornithine + 2 NH4(+) + CO2. It functions in the pathway amino-acid degradation; L-arginine degradation via AST pathway; L-glutamate and succinate from L-arginine: step 2/5. Its function is as follows. Catalyzes the hydrolysis of N(2)-succinylarginine into N(2)-succinylornithine, ammonia and CO(2). The polypeptide is N-succinylarginine dihydrolase (Burkholderia thailandensis (strain ATCC 700388 / DSM 13276 / CCUG 48851 / CIP 106301 / E264)).